We begin with the raw amino-acid sequence, 490 residues long: Tegument protein VP16 (490 aa).

A disordered region spans residues 11–35 (DADGVSPPPPRPAGGPKNTPAAPPL). 4 positions are modified to phosphoserine: S16, S351, S411, and S453. The interval 411–490 (STTAPITDVS…DAMGIDDFGG (80 aa)) is transcriptional activation.

The protein belongs to the herpesviridae tegument protein VP16 protein family. Interacts with VP22. Interacts with gH (via C-terminus). Interacts with the virion host shutoff protein (vhs). Interacts with VP11/12. Associates with the VP16-induced complex; binding to host HCFC1 activates VP16 for association with the octamer motif-binding host protein POU2F1, to form a multiprotein-DNA complex responsible for activating transcription of the viral immediate early genes.

The protein resides in the virion tegument. It is found in the host nucleus. In terms of biological role, transcriptional activator of immediate-early (IE) gene products (alpha genes). Acts as a key activator of lytic infection by initiating the lytic program through the assembly of the transcriptional regulatory VP16-induced complex composed of VP16 and two cellular factors, HCFC1 and POU2F 1. VP16-induced complex represents a regulatory switch: when it is on, it promotes IE-gene expression and thus lytic infection, and when it is off, it limits IE-gene transcription favoring latent infection. Functionally, may play a role in the aggregation of tegument proteins around nucleocapsids during virus morphogenesis. The polypeptide is Tegument protein VP16 (Human herpesvirus 2 (strain 333) (HHV-2)).